We begin with the raw amino-acid sequence, 207 residues long: ATP phosphoribosyltransferase (207 aa).

This sequence belongs to the ATP phosphoribosyltransferase family. Short subfamily. As to quaternary structure, heteromultimer composed of HisG and HisZ subunits.

It localises to the cytoplasm. The catalysed reaction is 1-(5-phospho-beta-D-ribosyl)-ATP + diphosphate = 5-phospho-alpha-D-ribose 1-diphosphate + ATP. It functions in the pathway amino-acid biosynthesis; L-histidine biosynthesis; L-histidine from 5-phospho-alpha-D-ribose 1-diphosphate: step 1/9. Catalyzes the condensation of ATP and 5-phosphoribose 1-diphosphate to form N'-(5'-phosphoribosyl)-ATP (PR-ATP). Has a crucial role in the pathway because the rate of histidine biosynthesis seems to be controlled primarily by regulation of HisG enzymatic activity. The polypeptide is ATP phosphoribosyltransferase (hisG) (Dictyoglomus turgidum (strain DSM 6724 / Z-1310)).